Consider the following 213-residue polypeptide: Ion-translocating oxidoreductase complex subunit E (213 aa).

Transmembrane regions (helical) follow at residues 25 to 45, 46 to 66, 77 to 97, 100 to 120, 135 to 155, and 181 to 201; these read TFGL…VENG, IGMA…VSAI, PVEI…MEAF, DLYT…IVIG, IIDA…IGGI, and AMFM…MTIV.

The protein belongs to the NqrDE/RnfAE family. The Rnf complex is probably composed of eight subunits, including RnfA, RnfB, RnfC, RnfD, RnfE and RnfG.

The protein resides in the cell membrane. Its function is as follows. Part of a membrane-bound complex that couples electron transfer with translocation of ions across the membrane. Catalyzes Na(+) transport, most probably coupled to electron transfer from reduced ferredoxin to methanophenazine and heterodisulfide reductase. Involved in heterodisulfide reduction during methanogenesis from acetate. The protein is Ion-translocating oxidoreductase complex subunit E of Methanosarcina acetivorans (strain ATCC 35395 / DSM 2834 / JCM 12185 / C2A).